We begin with the raw amino-acid sequence, 506 residues long: Ubiquitin carboxyl-terminal hydrolase 22 (506 aa).

Residues 4-121 (AGCSHVNGFK…KEEQRKAWKL (118 aa)) form a UBP-type zinc finger. Positions 6, 8, 46, 49, 59, 62, 67, 72, 76, 82, 95, and 98 each coordinate Zn(2+). In terms of domain architecture, USP spans 159-501 (RGLINLGNTC…EGYLLFYHKQ (343 aa)). Cys168 serves as the catalytic Nucleophile. The active-site Proton acceptor is His460.

The protein belongs to the peptidase C19 family. UBP8 subfamily. As to quaternary structure, component of some SAGA transcription coactivator-HAT complexes.

It is found in the nucleus. It catalyses the reaction Thiol-dependent hydrolysis of ester, thioester, amide, peptide and isopeptide bonds formed by the C-terminal Gly of ubiquitin (a 76-residue protein attached to proteins as an intracellular targeting signal).. Its function is as follows. Histone deubiquitinating component of the transcription regulatory histone acetylation (HAT) complex SAGA. Catalyzes the deubiquitination of both histones H2A and H2B, thereby acting as a coactivator. Recruited to specific gene promoters by activators, where it is required for transcription. The chain is Ubiquitin carboxyl-terminal hydrolase 22 (usp22) from Danio rerio (Zebrafish).